The following is a 351-amino-acid chain: MQLSDFSFELPDELIARYPLETRSASRLLHLDAKGQYHDHMFTDIIDLFEEGDLLVLNDTKVMKARLKGKRTTGGAIEILVERMPNHTTAYCHIKASNSPKAGAELFVGADNIPVIVRGRHENLFVVEFSQPILPVLEQYGQLPIPPYFNREAEEIDTERYQTVFHNPEKIASVAAPTASLHFDEELLAKLDQKGVKKTFVTLHVGAGTFMPVRTDDITNHVMHSEWCDVPQETIDLILATKARGNKVIAVGTTATRALESAAQAHGGKIAAWTGDTQIFIYPGYEFCIVDRLITNFHLPESTLLMLVSALSNRENILAAYEHAVKDRYHFFSYGDAMLIDKLEVLKLKLG.

The protein belongs to the QueA family. In terms of assembly, monomer.

It localises to the cytoplasm. It carries out the reaction 7-aminomethyl-7-carbaguanosine(34) in tRNA + S-adenosyl-L-methionine = epoxyqueuosine(34) in tRNA + adenine + L-methionine + 2 H(+). It functions in the pathway tRNA modification; tRNA-queuosine biosynthesis. Its function is as follows. Transfers and isomerizes the ribose moiety from AdoMet to the 7-aminomethyl group of 7-deazaguanine (preQ1-tRNA) to give epoxyqueuosine (oQ-tRNA). This is S-adenosylmethionine:tRNA ribosyltransferase-isomerase from Acinetobacter baumannii (strain SDF).